We begin with the raw amino-acid sequence, 659 residues long: Tetratricopeptide repeat protein 30 homolog (659 aa).

7 TPR repeats span residues 3–36, 43–76, 143–176, 178–210, 391–424, 450–483, and 533–566; these read SQNMLIRDGEYTKSIYTMIKEERFQEAINVLNGI, RAGLSLLGHCYYQTQDFIEASNCYEYLVNLVPDV, ATVKNDEGCLLFQANMFEDALQRYVSALQAGGFN, HIAYNAALCHYRKKENSQALNYIAEIVERGIRN, CRSAPDQNALRVALREYEFALESYLPVAMARAWI, TWRLHAAHVLFMRGDRYKEAAAFYEPIVRQNYDD, and CIVNLVIGTLYCAKGNYEFGLSRIAHALDGGSGA.

The protein belongs to the TTC30/dfy-1/fleer family.

The protein resides in the cell projection. It localises to the cilium. In terms of biological role, required for polyglutamylation of axonemal tubulin in sensory cilia. Plays a role in anterograde intraflagellar transport (IFT), the process by which cilia precursors are transported from the base of the cilium to the site of their incorporation at the tip. The sequence is that of Tetratricopeptide repeat protein 30 homolog from Aedes aegypti (Yellowfever mosquito).